A 429-amino-acid chain; its full sequence is UPF0597 protein GSU1527 (429 aa).

The protein belongs to the UPF0597 family.

This is UPF0597 protein GSU1527 from Geobacter sulfurreducens (strain ATCC 51573 / DSM 12127 / PCA).